The sequence spans 426 residues: Chaperone SurA (426 aa).

A signal peptide spans 1-13; the sequence is MLGALFLSTAASA. 2 consecutive PpiC domains span residues 164–265 and 274–373; these read SEEL…KLLD and RDEV…EVLG.

It is found in the periplasm. The enzyme catalyses [protein]-peptidylproline (omega=180) = [protein]-peptidylproline (omega=0). Its function is as follows. Chaperone involved in the correct folding and assembly of outer membrane proteins. Recognizes specific patterns of aromatic residues and the orientation of their side chains, which are found more frequently in integral outer membrane proteins. May act in both early periplasmic and late outer membrane-associated steps of protein maturation. The polypeptide is Chaperone SurA (Pseudomonas fluorescens (strain ATCC BAA-477 / NRRL B-23932 / Pf-5)).